Here is a 220-residue protein sequence, read N- to C-terminus: tRNA (guanine-N(7)-)-methyltransferase (220 aa).

Residues glutamate 44, glutamate 69, asparagine 96, and aspartate 118 each coordinate S-adenosyl-L-methionine. Residue aspartate 118 is part of the active site. A substrate-binding site is contributed by lysine 122. The tract at residues 124 to 129 is interaction with RNA; the sequence is RHEKRR. Substrate is bound by residues aspartate 154 and 191–194; that span reads TEYE.

The protein belongs to the class I-like SAM-binding methyltransferase superfamily. TrmB family.

The enzyme catalyses guanosine(46) in tRNA + S-adenosyl-L-methionine = N(7)-methylguanosine(46) in tRNA + S-adenosyl-L-homocysteine. It functions in the pathway tRNA modification; N(7)-methylguanine-tRNA biosynthesis. Functionally, catalyzes the formation of N(7)-methylguanine at position 46 (m7G46) in tRNA. This is tRNA (guanine-N(7)-)-methyltransferase from Geobacillus sp. (strain WCH70).